The primary structure comprises 101 residues: MAKKGMINRELKREKTVAKYAAKRAELKATIANVNATDEERFDAMLKLQALPRNASPVRLRNRCGLTGRPHGYFRKFGLSRNKLRDTVMQGDVPGVVKASW.

It belongs to the universal ribosomal protein uS14 family. As to quaternary structure, part of the 30S ribosomal subunit. Contacts proteins S3 and S10.

Its function is as follows. Binds 16S rRNA, required for the assembly of 30S particles and may also be responsible for determining the conformation of the 16S rRNA at the A site. This chain is Small ribosomal subunit protein uS14, found in Acinetobacter baylyi (strain ATCC 33305 / BD413 / ADP1).